Here is a 315-residue protein sequence, read N- to C-terminus: 4-hydroxy-3-methylbut-2-enyl diphosphate reductase (315 aa).

Residue Cys12 participates in [4Fe-4S] cluster binding. Residues His41 and His74 each contribute to the (2E)-4-hydroxy-3-methylbut-2-enyl diphosphate site. 2 residues coordinate dimethylallyl diphosphate: His41 and His74. Isopentenyl diphosphate-binding residues include His41 and His74. Residue Cys96 coordinates [4Fe-4S] cluster. His124 lines the (2E)-4-hydroxy-3-methylbut-2-enyl diphosphate pocket. Dimethylallyl diphosphate is bound at residue His124. Residue His124 coordinates isopentenyl diphosphate. The Proton donor role is filled by Glu126. Position 168 (Thr168) interacts with (2E)-4-hydroxy-3-methylbut-2-enyl diphosphate. Cys198 serves as a coordination point for [4Fe-4S] cluster. 4 residues coordinate (2E)-4-hydroxy-3-methylbut-2-enyl diphosphate: Ser226, Ser227, Asn228, and Ser270. Dimethylallyl diphosphate-binding residues include Ser226, Ser227, Asn228, and Ser270. Isopentenyl diphosphate-binding residues include Ser226, Ser227, Asn228, and Ser270.

The protein belongs to the IspH family. It depends on [4Fe-4S] cluster as a cofactor.

It catalyses the reaction isopentenyl diphosphate + 2 oxidized [2Fe-2S]-[ferredoxin] + H2O = (2E)-4-hydroxy-3-methylbut-2-enyl diphosphate + 2 reduced [2Fe-2S]-[ferredoxin] + 2 H(+). It carries out the reaction dimethylallyl diphosphate + 2 oxidized [2Fe-2S]-[ferredoxin] + H2O = (2E)-4-hydroxy-3-methylbut-2-enyl diphosphate + 2 reduced [2Fe-2S]-[ferredoxin] + 2 H(+). Its pathway is isoprenoid biosynthesis; dimethylallyl diphosphate biosynthesis; dimethylallyl diphosphate from (2E)-4-hydroxy-3-methylbutenyl diphosphate: step 1/1. The protein operates within isoprenoid biosynthesis; isopentenyl diphosphate biosynthesis via DXP pathway; isopentenyl diphosphate from 1-deoxy-D-xylulose 5-phosphate: step 6/6. Catalyzes the conversion of 1-hydroxy-2-methyl-2-(E)-butenyl 4-diphosphate (HMBPP) into a mixture of isopentenyl diphosphate (IPP) and dimethylallyl diphosphate (DMAPP). Acts in the terminal step of the DOXP/MEP pathway for isoprenoid precursor biosynthesis. This chain is 4-hydroxy-3-methylbut-2-enyl diphosphate reductase, found in Pseudomonas putida (strain GB-1).